Consider the following 131-residue polypeptide: Maturin (131 aa).

At Y34 the chain carries Phosphotyrosine. Over residues 107-120 (FEEYSADVEEEEPE) the composition is skewed to acidic residues. Residues 107–131 (FEEYSADVEEEEPEADHPQMGVSQQ) form a disordered region.

Belongs to the MTURN family. Post-translationally, phosphorylation at Tyr-34 is essential for its ability to promote megakaryocyte differentiation.

It is found in the cytoplasm. Promotes megakaryocyte differentiation by enhancing ERK and JNK signaling as well as up-regulating RUNX1 and FLI1 expression. Represses NF-kappa-B transcriptional activity by inhibiting phosphorylation of RELA at 'Ser- 536'. May be involved in early neuronal development. The protein is Maturin (MTURN) of Bos taurus (Bovine).